A 147-amino-acid chain; its full sequence is D-aminoacyl-tRNA deacylase (147 aa).

The Gly-cisPro motif, important for rejection of L-amino acids signature appears at 136 to 137; that stretch reads GP.

This sequence belongs to the DTD family. As to quaternary structure, homodimer.

Its subcellular location is the cytoplasm. The enzyme catalyses glycyl-tRNA(Ala) + H2O = tRNA(Ala) + glycine + H(+). The catalysed reaction is a D-aminoacyl-tRNA + H2O = a tRNA + a D-alpha-amino acid + H(+). In terms of biological role, an aminoacyl-tRNA editing enzyme that deacylates mischarged D-aminoacyl-tRNAs. Also deacylates mischarged glycyl-tRNA(Ala), protecting cells against glycine mischarging by AlaRS. Acts via tRNA-based rather than protein-based catalysis; rejects L-amino acids rather than detecting D-amino acids in the active site. By recycling D-aminoacyl-tRNA to D-amino acids and free tRNA molecules, this enzyme counteracts the toxicity associated with the formation of D-aminoacyl-tRNA entities in vivo and helps enforce protein L-homochirality. The chain is D-aminoacyl-tRNA deacylase from Streptococcus equi subsp. zooepidemicus (strain H70).